Here is a 260-residue protein sequence, read N- to C-terminus: MTILAEIVKYKQSLLQNGYYQDKLNTLKSVKIQNKKSFINAIEKEPKLAIIAEIKSKSPTVNDLPERDLSQQISDYEKYGANAVSILTDEKYFGGSFERLQALTTKTTLPVLCKDFIIDPLQIDVAKQAGASMILLIVNILSDKQLKDLYNYAISQNLEVLIEVHDRHELERAYKVNAKLIGVNNRDLKRFVTNVEHTNTILENKKPNHHYISESGIHDASDVRKILHSGIDGLLIGEALMRCDNLSEFLPQLKMQKVKS.

This sequence belongs to the TrpC family.

The enzyme catalyses 1-(2-carboxyphenylamino)-1-deoxy-D-ribulose 5-phosphate + H(+) = (1S,2R)-1-C-(indol-3-yl)glycerol 3-phosphate + CO2 + H2O. It participates in amino-acid biosynthesis; L-tryptophan biosynthesis; L-tryptophan from chorismate: step 4/5. The chain is Indole-3-glycerol phosphate synthase from Staphylococcus aureus (strain Mu3 / ATCC 700698).